Reading from the N-terminus, the 236-residue chain is Lipoprotein NlpE (236 aa).

The N-terminal stretch at 1-20 is a signal peptide; it reads MVKKAIVTAMAVISLFTLMG. Cysteine 21 is lipidated: N-palmitoyl cysteine. The S-diacylglycerol cysteine moiety is linked to residue cysteine 21. The interval 21–100 is N-terminal domain; it reads CNNRAEVDTL…WARTADKLVL (80 aa). The Periplasmic segment spans residues 21–236; it reads CNNRAEVDTL…PNQDCSSLGQ (216 aa). Residues 51-54 carry the CXXC motif; it reads CADC. Residues 126–236 are C-terminal domain; the sequence is PIESQFNYTL…PNQDCSSLGQ (111 aa). The interval 144–156 is could contain a copper-binding motif; the sequence is MTPMTLRGMYFYM. Cysteine 165 and cysteine 231 are disulfide-bonded.

In terms of assembly, probably exists as a monomer in vivo, can however form homodimers which swap domains. Palmitoylated. Post-translationally, seems to only form a disulfide bond between Cys-165 and Cys-231. The 2 other cysteine residues may however be chemically active.

It localises to the cell outer membrane. Functionally, involved in copper homeostasis, could be involved in both copper efflux and the delivery of copper to copper-dependent enzymes. Required for efficient binding of stationary phase cells to hydrophobic surfaces, part of the process of biofilm formation. Functions during envelope stress responses; when overproduced induces degP through the activation of the two-component envelope stress response system CpxA/CpxR. DegP induction seems to require membrane anchoring of this protein. Structural changes and/or interaction of the CXXC motif with its environment may lead to activation of the Cpx stress response. This chain is Lipoprotein NlpE, found in Escherichia coli (strain K12).